Here is a 183-residue protein sequence, read N- to C-terminus: Ribosome-recycling factor (183 aa).

The protein belongs to the RRF family.

The protein resides in the cytoplasm. Its function is as follows. Responsible for the release of ribosomes from messenger RNA at the termination of protein biosynthesis. May increase the efficiency of translation by recycling ribosomes from one round of translation to another. The protein is Ribosome-recycling factor of Ureaplasma urealyticum serovar 10 (strain ATCC 33699 / Western).